We begin with the raw amino-acid sequence, 483 residues long: Glutamyl-tRNA(Gln) amidotransferase subunit A (483 aa).

Active-site charge relay system residues include Lys76 and Ser151. Ser175 acts as the Acyl-ester intermediate in catalysis.

This sequence belongs to the amidase family. GatA subfamily. In terms of assembly, heterotrimer of A, B and C subunits.

The enzyme catalyses L-glutamyl-tRNA(Gln) + L-glutamine + ATP + H2O = L-glutaminyl-tRNA(Gln) + L-glutamate + ADP + phosphate + H(+). Its function is as follows. Allows the formation of correctly charged Gln-tRNA(Gln) through the transamidation of misacylated Glu-tRNA(Gln) in organisms which lack glutaminyl-tRNA synthetase. The reaction takes place in the presence of glutamine and ATP through an activated gamma-phospho-Glu-tRNA(Gln). This Pseudomonas putida (strain ATCC 47054 / DSM 6125 / CFBP 8728 / NCIMB 11950 / KT2440) protein is Glutamyl-tRNA(Gln) amidotransferase subunit A.